A 453-amino-acid polypeptide reads, in one-letter code: 4,4'-diapolycopene-4,4'-dial dehydrogenase (453 aa).

Over residues 1–20 (MPDNDSHSLKSLPERQREDL) the composition is skewed to basic and acidic residues. A disordered region spans residues 1–23 (MPDNDSHSLKSLPERQREDLFSA). Active-site residues include E215 and C249.

The protein belongs to the aldehyde dehydrogenase family.

The enzyme catalyses all-trans-4,4'-diapolycopene-4,4'-dial + 2 A + 2 H2O = all-trans-4,4'-diapolycopene-4,4'-dioate + 2 AH2 + 2 H(+). It participates in carotenoid biosynthesis. Involved in the biosynthesis of the major C30 carotenoid 4,4'-diapolycopene-4,4'-dioic acid, which protects B.firmus from peroxidative reactions. Catalyzes the oxidation of 4,4'-diapolycopene-4,4'-dial to yield 4,4'-diapolycopene-4,4'-dioic aci. The polypeptide is 4,4'-diapolycopene-4,4'-dial dehydrogenase (Cytobacillus firmus (Bacillus firmus)).